Consider the following 201-residue polypeptide: Small ribosomal subunit protein uS4c (201 aa).

Positions 20–43 (GLTNKRPKSRNDPTNQSSSRKISQ) are disordered. The segment covering 31–41 (DPTNQSSSRKI) has biased composition (polar residues). One can recognise an S4 RNA-binding domain in the interval 89–157 (MRLDNIIFRL…IGKNLDLSQK (69 aa)).

The protein belongs to the universal ribosomal protein uS4 family. Part of the 30S ribosomal subunit. Contacts protein S5. The interaction surface between S4 and S5 is involved in control of translational fidelity.

It is found in the plastid. The protein localises to the chloroplast. Functionally, one of the primary rRNA binding proteins, it binds directly to 16S rRNA where it nucleates assembly of the body of the 30S subunit. Its function is as follows. With S5 and S12 plays an important role in translational accuracy. In Cycas taitungensis (Prince sago), this protein is Small ribosomal subunit protein uS4c (rps4).